Reading from the N-terminus, the 2465-residue chain is Serine/threonine-protein kinase TOR (2465 aa).

HEAT repeat units follow at residues 184-221 (VHVP…VIEK), 271-308 (SRYR…FLRD), 348-389 (AELV…AMGP), 549-587 (RLVE…FDDF), 588-625 (LAQA…KNPA), 717-755 (QYLP…STGY), 761-799 (NEYP…LDPH), 888-926 (PYLP…IVRQ), 981-1018 (MYIL…VFGG), 1022-1059 (EHMH…TVQV), and 1061-1098 (THVS…ALGE). Residues 1158 to 1191 (DFGGVPSEEADETQRQPRSHQVNDVRLRSAGEAS) form a disordered region. The FAT domain maps to 1297–1877 (LLGALAEKCR…MYPLLVACKS (581 aa)). Residues 2051–2369 (FVPQLIVITS…PPRGAREREL (319 aa)) enclose the PI3K/PI4K catalytic domain. Positions 2057–2063 (VITSKQR) are G-loop. The interval 2230 to 2238 (GLGDRHPSN) is catalytic loop. Residues 2250–2275 (HIDFGDCFEASMNREKFPEKVPFRLT) form an activation loop region. The disordered stretch occupies residues 2401 to 2431 (RDFSSGSSLSGAGSSTQHGNEHLASGDTREV). Residues 2404–2415 (SSGSSLSGAGSS) are compositionally biased toward low complexity. The FATC domain occupies 2433 to 2465 (PGLSVKVQVQRLILQATSHENLCQNYVGWCPFW).

It belongs to the PI3/PI4-kinase family. As to quaternary structure, the target of rapamycin complex 1 (TORC1) is composed of at least RAPTOR, LST8 and TOR.

It carries out the reaction L-seryl-[protein] + ATP = O-phospho-L-seryl-[protein] + ADP + H(+). It catalyses the reaction L-threonyl-[protein] + ATP = O-phospho-L-threonyl-[protein] + ADP + H(+). Insensitive to inhibition by rapamycin. In terms of biological role, component of TORC1 complex, which is an essential cell growth regulator that controls plant development. Acts through the phosphorylation of downstream effectors that are recruited by the binding partner RAPTOR. Acts by activating transcription, protein synthesis and ribosome biogenesis, and inhibiting mRNA degradation and autophagy. This Oryza sativa subsp. japonica (Rice) protein is Serine/threonine-protein kinase TOR.